The primary structure comprises 225 residues: NAD(P)H-quinone oxidoreductase subunit K, chloroplastic (225 aa).

[4Fe-4S] cluster contacts are provided by cysteine 43, cysteine 44, cysteine 108, and cysteine 139.

It belongs to the complex I 20 kDa subunit family. As to quaternary structure, NDH is composed of at least 16 different subunits, 5 of which are encoded in the nucleus. The cofactor is [4Fe-4S] cluster.

It localises to the plastid. It is found in the chloroplast thylakoid membrane. The enzyme catalyses a plastoquinone + NADH + (n+1) H(+)(in) = a plastoquinol + NAD(+) + n H(+)(out). It catalyses the reaction a plastoquinone + NADPH + (n+1) H(+)(in) = a plastoquinol + NADP(+) + n H(+)(out). NDH shuttles electrons from NAD(P)H:plastoquinone, via FMN and iron-sulfur (Fe-S) centers, to quinones in the photosynthetic chain and possibly in a chloroplast respiratory chain. The immediate electron acceptor for the enzyme in this species is believed to be plastoquinone. Couples the redox reaction to proton translocation, and thus conserves the redox energy in a proton gradient. This is NAD(P)H-quinone oxidoreductase subunit K, chloroplastic from Crucihimalaya wallichii (Rock-cress).